The sequence spans 156 residues: ATP synthase subunit b (156 aa).

A helical transmembrane segment spans residues 11–31; sequence AIAFILFVWFCMKYVWPPLMA.

The protein belongs to the ATPase B chain family. F-type ATPases have 2 components, F(1) - the catalytic core - and F(0) - the membrane proton channel. F(1) has five subunits: alpha(3), beta(3), gamma(1), delta(1), epsilon(1). F(0) has three main subunits: a(1), b(2) and c(10-14). The alpha and beta chains form an alternating ring which encloses part of the gamma chain. F(1) is attached to F(0) by a central stalk formed by the gamma and epsilon chains, while a peripheral stalk is formed by the delta and b chains.

Its subcellular location is the cell inner membrane. Its function is as follows. F(1)F(0) ATP synthase produces ATP from ADP in the presence of a proton or sodium gradient. F-type ATPases consist of two structural domains, F(1) containing the extramembraneous catalytic core and F(0) containing the membrane proton channel, linked together by a central stalk and a peripheral stalk. During catalysis, ATP synthesis in the catalytic domain of F(1) is coupled via a rotary mechanism of the central stalk subunits to proton translocation. Component of the F(0) channel, it forms part of the peripheral stalk, linking F(1) to F(0). This Enterobacter sp. (strain 638) protein is ATP synthase subunit b.